Consider the following 238-residue polypeptide: uncharacterized protein (238 aa).

The tract at residues 219-238 is disordered; that stretch reads EESINNNVDDTDDIDNDNFI. Over residues 227 to 238 the composition is skewed to acidic residues; that stretch reads DDTDDIDNDNFI.

This is an uncharacterized protein from Buchnera aphidicola subsp. Acyrthosiphon pisum (strain APS) (Acyrthosiphon pisum symbiotic bacterium).